Here is a 1009-residue protein sequence, read N- to C-terminus: DNA ligase 4 (1009 aa).

Disordered stretches follow at residues Met-1–Leu-34 and Lys-51–Ala-72. Residues Lys-51–Gly-65 are compositionally biased toward basic residues. ATP is bound by residues Glu-315, Lys-317, Leu-318, Arg-322, Glu-384, Phe-424, Glu-484, Lys-489, Lys-506, and Lys-508. Lys-317 functions as the N6-AMP-lysine intermediate in the catalytic mechanism. Glu-384 serves as a coordination point for Mg(2+). Glu-484 is a binding site for Mg(2+). BRCT domains lie at Pro-715 to Leu-808 and Pro-887 to Pro-995.

The protein belongs to the ATP-dependent DNA ligase family. It depends on Mg(2+) as a cofactor.

It is found in the nucleus. The enzyme catalyses ATP + (deoxyribonucleotide)n-3'-hydroxyl + 5'-phospho-(deoxyribonucleotide)m = (deoxyribonucleotide)n+m + AMP + diphosphate.. DNA ligase involved in DNA non-homologous end joining (NHEJ); required for double-strand break (DSB) repair. The sequence is that of DNA ligase 4 (lig4) from Emericella nidulans (strain FGSC A4 / ATCC 38163 / CBS 112.46 / NRRL 194 / M139) (Aspergillus nidulans).